We begin with the raw amino-acid sequence, 340 residues long: Cell division protein FtsQ (340 aa).

The segment at 1 to 41 is disordered; the sequence is MQGLNPFHRDQGAGGRPAPVRPAPARPAPVAPRTPRKDPAP. The Cytoplasmic portion of the chain corresponds to 1–55; the sequence is MQGLNPFHRDQGAGGRPAPVRPAPARPAPVAPRTPRKDPAPSRLAYRLNRMMLRP. The span at 19–32 shows a compositional bias: pro residues; that stretch reads PVRPAPARPAPVAP. A helical membrane pass occupies residues 56–78; sequence LVRRLVHVGLPAFLAALVAGIWL. Residues 79 to 340 lie on the Periplasmic side of the membrane; sequence SDDTRRANLT…NAAKAKKKSG (262 aa). Positions 104–172 constitute a POTRA domain; sequence FMVKMMTIEG…GVLSAVVTER (69 aa). Residues 308 to 340 form a disordered region; it reads RQARGQPELGPDGTPLAPEATAGNAAKAKKKSG. Residues 324-333 are compositionally biased toward low complexity; sequence APEATAGNAA.

It belongs to the FtsQ/DivIB family. FtsQ subfamily.

It localises to the cell inner membrane. In terms of biological role, essential cell division protein. In Paracoccus denitrificans (strain Pd 1222), this protein is Cell division protein FtsQ.